A 1019-amino-acid polypeptide reads, in one-letter code: Serine/threonine-protein kinase 31 (1019 aa).

The Tudor domain maps to 78–137 (NLDPNKIYGGLFSEDQCWYRCKVLKIISVEKCLVRYIDYGNTEILNRSDIVEIPLELQFS). A coiled-coil region spans residues 298–355 (EKIKQDQKLIEENEKLKTEKDALLESYKALELKVEQIAQELQQEKAAAVDLTNHLEYT). The region spanning 710 to 1019 (IGLLKYMNSG…TRNGEANFDC (310 aa)) is the Protein kinase domain. Residues 716–724 (MNSGGLLTM) and K737 each bind ATP.

The protein belongs to the protein kinase superfamily. Ser/Thr protein kinase family. As to expression, testis specific.

It carries out the reaction L-seryl-[protein] + ATP = O-phospho-L-seryl-[protein] + ADP + H(+). It catalyses the reaction L-threonyl-[protein] + ATP = O-phospho-L-threonyl-[protein] + ADP + H(+). In Homo sapiens (Human), this protein is Serine/threonine-protein kinase 31 (STK31).